The following is a 376-amino-acid chain: Erythronate-4-phosphate dehydrogenase (376 aa).

Ser45 and Thr66 together coordinate substrate. Residues Asp146 and Thr175 each contribute to the NAD(+) site. The active site involves Arg209. Asp233 is a binding site for NAD(+). Residue Glu238 is part of the active site. The Proton donor role is filled by His255. Gly258 serves as a coordination point for NAD(+). Residue Tyr259 participates in substrate binding.

It belongs to the D-isomer specific 2-hydroxyacid dehydrogenase family. PdxB subfamily. Homodimer.

The protein localises to the cytoplasm. The catalysed reaction is 4-phospho-D-erythronate + NAD(+) = (R)-3-hydroxy-2-oxo-4-phosphooxybutanoate + NADH + H(+). Its pathway is cofactor biosynthesis; pyridoxine 5'-phosphate biosynthesis; pyridoxine 5'-phosphate from D-erythrose 4-phosphate: step 2/5. Functionally, catalyzes the oxidation of erythronate-4-phosphate to 3-hydroxy-2-oxo-4-phosphonooxybutanoate. The sequence is that of Erythronate-4-phosphate dehydrogenase from Baumannia cicadellinicola subsp. Homalodisca coagulata.